Here is a 154-residue protein sequence, read N- to C-terminus: Cyanate hydratase (154 aa).

Residues Arg-100, Glu-103, and Ser-126 contribute to the active site.

This sequence belongs to the cyanase family.

It carries out the reaction cyanate + hydrogencarbonate + 3 H(+) = NH4(+) + 2 CO2. Its function is as follows. Catalyzes the reaction of cyanate with bicarbonate to produce ammonia and carbon dioxide. The protein is Cyanate hydratase of Aspergillus terreus (strain NIH 2624 / FGSC A1156).